The sequence spans 208 residues: Uracil phosphoribosyltransferase (208 aa).

5-phospho-alpha-D-ribose 1-diphosphate-binding positions include Arg78, Arg103, and 130–138; that span reads DPMLATGGT. Uracil contacts are provided by residues Ile193 and 198-200; that span reads GDA. Position 199 (Asp199) interacts with 5-phospho-alpha-D-ribose 1-diphosphate.

Belongs to the UPRTase family. Requires Mg(2+) as cofactor.

The enzyme catalyses UMP + diphosphate = 5-phospho-alpha-D-ribose 1-diphosphate + uracil. The protein operates within pyrimidine metabolism; UMP biosynthesis via salvage pathway; UMP from uracil: step 1/1. Allosterically activated by GTP. Catalyzes the conversion of uracil and 5-phospho-alpha-D-ribose 1-diphosphate (PRPP) to UMP and diphosphate. In Nitratidesulfovibrio vulgaris (strain ATCC 29579 / DSM 644 / CCUG 34227 / NCIMB 8303 / VKM B-1760 / Hildenborough) (Desulfovibrio vulgaris), this protein is Uracil phosphoribosyltransferase.